The sequence spans 270 residues: MCVVVPQGLRSVKHIILVLSGKGGVGKSTVATQLSWALYNQGNKVGLLDIDLCGPSIPRMMNVENNDVHQCSDGWVPVYTGPDQRLGVMSIGFLLHSKEDAVVWRGPKKNAMIKQFLSDVCWGDIDYLIIDTPPGTSDEHITVVENLKTCHPDGAILVTTPQGVAISDVRREITFCKKTKIPVLGIVENMSGFVCPHCSECTNVFSKGGGEALAKECEVPFLGCIPLDPNLTMNIEDGKSFSDLLSNSPAVESVNSIVTKISHATSQNQT.

ATP is bound at residue 21–28 (GKGGVGKS). The [4Fe-4S] cluster site is built by Cys195 and Cys198.

Belongs to the Mrp/NBP35 ATP-binding proteins family. NUBP2/CFD1 subfamily. Heterotetramer of 2 NUBP1 and 2 NUBP2 chains. [4Fe-4S] cluster serves as cofactor.

The protein resides in the cytoplasm. Functionally, component of the cytosolic iron-sulfur (Fe/S) protein assembly (CIA) machinery. Required for maturation of extramitochondrial Fe-S proteins. The NUBP1-NUBP2 heterotetramer forms a Fe-S scaffold complex, mediating the de novo assembly of an Fe-S cluster and its transfer to target apoproteins. This is Cytosolic Fe-S cluster assembly factor NUBP2 homolog from Nematostella vectensis (Starlet sea anemone).